A 550-amino-acid polypeptide reads, in one-letter code: Methionine--tRNA ligase (550 aa).

The short motif at 14–24 (PYANGSLHIGH) is the 'HIGH' region element. The Zn(2+) site is built by Cys145, Cys148, Cys158, and Cys161. Positions 331-335 (KMSKS) match the 'KMSKS' region motif. Lys334 contributes to the ATP binding site.

The protein belongs to the class-I aminoacyl-tRNA synthetase family. MetG type 1 subfamily. Monomer. Requires Zn(2+) as cofactor.

Its subcellular location is the cytoplasm. The catalysed reaction is tRNA(Met) + L-methionine + ATP = L-methionyl-tRNA(Met) + AMP + diphosphate. Its function is as follows. Is required not only for elongation of protein synthesis but also for the initiation of all mRNA translation through initiator tRNA(fMet) aminoacylation. The chain is Methionine--tRNA ligase from Wigglesworthia glossinidia brevipalpis.